A 386-amino-acid chain; its full sequence is Glucose-1-phosphate adenylyltransferase (386 aa).

Alpha-D-glucose 1-phosphate is bound by residues Tyr99, Gly164, 179-180 (EK), and Ser190.

It belongs to the bacterial/plant glucose-1-phosphate adenylyltransferase family. As to quaternary structure, homotetramer.

It carries out the reaction alpha-D-glucose 1-phosphate + ATP + H(+) = ADP-alpha-D-glucose + diphosphate. It participates in glycan biosynthesis; glycogen biosynthesis. Functionally, involved in the biosynthesis of ADP-glucose, a building block required for the elongation reactions to produce glycogen. Catalyzes the reaction between ATP and alpha-D-glucose 1-phosphate (G1P) to produce pyrophosphate and ADP-Glc. This is Glucose-1-phosphate adenylyltransferase from Clostridioides difficile (strain 630) (Peptoclostridium difficile).